Here is a 408-residue protein sequence, read N- to C-terminus: Putative mannan endo-1,4-beta-mannosidase 4 (408 aa).

An N-terminal signal peptide occupies residues 1 to 23 (MKCLCFIVLLAIVIAQSYVGVEA). A glycan (N-linked (GlcNAc...) asparagine) is linked at Asn-73. Substrate-binding residues include Trp-85 and Asn-201. Glu-202 acts as the Proton donor in catalysis. The active-site Nucleophile is the Glu-322. Position 364 (Trp-364) interacts with substrate.

This sequence belongs to the glycosyl hydrolase 5 (cellulase A) family.

It localises to the secreted. The enzyme catalyses Random hydrolysis of (1-&gt;4)-beta-D-mannosidic linkages in mannans, galactomannans and glucomannans.. The chain is Putative mannan endo-1,4-beta-mannosidase 4 (MAN4) from Arabidopsis thaliana (Mouse-ear cress).